We begin with the raw amino-acid sequence, 216 residues long: Guanylate kinase (216 aa).

A Guanylate kinase-like domain is found at 11–189 (GVLIVISGPS…AVKKIEAILL (179 aa)). 18–25 (GPSGAGKG) provides a ligand contact to ATP.

This sequence belongs to the guanylate kinase family.

It is found in the cytoplasm. The enzyme catalyses GMP + ATP = GDP + ADP. Essential for recycling GMP and indirectly, cGMP. The polypeptide is Guanylate kinase (gmk) (Clostridium perfringens (strain 13 / Type A)).